The sequence spans 456 residues: Adenylosuccinate lyase (456 aa).

Residues 15–16 (RY) and 90–92 (NHD) each bind N(6)-(1,2-dicarboxyethyl)-AMP. Residue Lys-94 is modified to N6-acetyllysine. 122–123 (TS) contacts N(6)-(1,2-dicarboxyethyl)-AMP. His-171 acts as the Proton donor/acceptor in catalysis. N(6)-(1,2-dicarboxyethyl)-AMP is bound at residue Gln-247. The Proton donor/acceptor role is filled by Ser-295. N(6)-(1,2-dicarboxyethyl)-AMP is bound by residues Ser-296, 301–303 (KVN), Asn-309, Arg-335, and 340–344 (STVLR). Position 366 is an N6-acetyllysine (Lys-366).

It belongs to the lyase 1 family. Adenylosuccinate lyase subfamily. In terms of assembly, homotetramer. Residues from neighboring subunits contribute catalytic and substrate-binding residues to each active site.

The enzyme catalyses N(6)-(1,2-dicarboxyethyl)-AMP = fumarate + AMP. It catalyses the reaction (2S)-2-[5-amino-1-(5-phospho-beta-D-ribosyl)imidazole-4-carboxamido]succinate = 5-amino-1-(5-phospho-beta-D-ribosyl)imidazole-4-carboxamide + fumarate. It participates in purine metabolism; AMP biosynthesis via de novo pathway; AMP from IMP: step 2/2. Its pathway is purine metabolism; IMP biosynthesis via de novo pathway; 5-amino-1-(5-phospho-D-ribosyl)imidazole-4-carboxamide from 5-amino-1-(5-phospho-D-ribosyl)imidazole-4-carboxylate: step 2/2. In terms of biological role, catalyzes two reactions in de novo purine nucleotide biosynthesis. Catalyzes the breakdown of 5-aminoimidazole- (N-succinylocarboxamide) ribotide (SAICAR or 2-[5-amino-1-(5-phospho-beta-D-ribosyl)imidazole-4-carboxamido]succinate) to 5-aminoimidazole-4-carboxamide ribotide (AICAR or 5-amino-1-(5-phospho-beta-D-ribosyl)imidazole-4-carboxamide) and fumarate, and of adenylosuccinate (ADS or N(6)-(1,2-dicarboxyethyl)-AMP) to adenosine monophosphate (AMP) and fumarate. The protein is Adenylosuccinate lyase (purB) of Escherichia coli O6:H1 (strain CFT073 / ATCC 700928 / UPEC).